The primary structure comprises 778 residues: uncharacterized protein (778 aa).

Residues 1-92 (MSFVIAVPEA…GARSYVVAEA (92 aa)) enclose the PE domain. 3 disordered regions span residues 125–163 (ADGT…AGLI), 372–510 (TGLA…GDAF), and 718–778 (QGGL…GADG). 3 stretches are compositionally biased toward gly residues: residues 402 to 429 (NQTG…GGLG), 436 to 510 (DGTG…GDAF), and 718 to 763 (QGGL…GSSG).

Belongs to the mycobacterial PE family. PGRS subfamily.

This is an uncharacterized protein from Mycobacterium bovis (strain ATCC BAA-935 / AF2122/97).